Here is a 208-residue protein sequence, read N- to C-terminus: NAD(P)H-quinone oxidoreductase subunit I (208 aa).

4Fe-4S ferredoxin-type domains follow at residues 55–84 (GRIH…VDWV) and 95–124 (RNYS…MTEE). [4Fe-4S] cluster contacts are provided by Cys-64, Cys-67, Cys-70, Cys-74, Cys-104, Cys-107, Cys-110, and Cys-114.

It belongs to the complex I 23 kDa subunit family. In terms of assembly, NDH-1 is composed of at least 11 different subunits. Requires [4Fe-4S] cluster as cofactor.

It is found in the cellular thylakoid membrane. The catalysed reaction is a plastoquinone + NADH + (n+1) H(+)(in) = a plastoquinol + NAD(+) + n H(+)(out). It catalyses the reaction a plastoquinone + NADPH + (n+1) H(+)(in) = a plastoquinol + NADP(+) + n H(+)(out). Functionally, NDH-1 shuttles electrons from an unknown electron donor, via FMN and iron-sulfur (Fe-S) centers, to quinones in the respiratory and/or the photosynthetic chain. The immediate electron acceptor for the enzyme in this species is believed to be plastoquinone. Couples the redox reaction to proton translocation, and thus conserves the redox energy in a proton gradient. The polypeptide is NAD(P)H-quinone oxidoreductase subunit I (Prochlorococcus marinus (strain AS9601)).